The sequence spans 145 residues: D-aminoacyl-tRNA deacylase (145 aa).

The short motif at 137–138 is the Gly-cisPro motif, important for rejection of L-amino acids element; the sequence is GP.

This sequence belongs to the DTD family. Homodimer.

Its subcellular location is the cytoplasm. It carries out the reaction glycyl-tRNA(Ala) + H2O = tRNA(Ala) + glycine + H(+). The catalysed reaction is a D-aminoacyl-tRNA + H2O = a tRNA + a D-alpha-amino acid + H(+). In terms of biological role, an aminoacyl-tRNA editing enzyme that deacylates mischarged D-aminoacyl-tRNAs. Also deacylates mischarged glycyl-tRNA(Ala), protecting cells against glycine mischarging by AlaRS. Acts via tRNA-based rather than protein-based catalysis; rejects L-amino acids rather than detecting D-amino acids in the active site. By recycling D-aminoacyl-tRNA to D-amino acids and free tRNA molecules, this enzyme counteracts the toxicity associated with the formation of D-aminoacyl-tRNA entities in vivo and helps enforce protein L-homochirality. The protein is D-aminoacyl-tRNA deacylase of Shewanella woodyi (strain ATCC 51908 / MS32).